The chain runs to 155 residues: Large ribosomal subunit protein uL30 (155 aa).

It belongs to the universal ribosomal protein uL30 family. In terms of assembly, part of the 50S ribosomal subunit.

This chain is Large ribosomal subunit protein uL30, found in Nitrosopumilus maritimus (strain SCM1).